The following is a 239-amino-acid chain: Probable transcriptional regulatory protein lin0388 (239 aa).

This sequence belongs to the TACO1 family. YeeN subfamily.

It localises to the cytoplasm. The polypeptide is Probable transcriptional regulatory protein lin0388 (Listeria innocua serovar 6a (strain ATCC BAA-680 / CLIP 11262)).